The chain runs to 303 residues: Ribosomal protein L11 methyltransferase (303 aa).

Thr-144, Gly-165, Asp-187, and Asn-235 together coordinate S-adenosyl-L-methionine.

It belongs to the methyltransferase superfamily. PrmA family.

The protein resides in the cytoplasm. It carries out the reaction L-lysyl-[protein] + 3 S-adenosyl-L-methionine = N(6),N(6),N(6)-trimethyl-L-lysyl-[protein] + 3 S-adenosyl-L-homocysteine + 3 H(+). Functionally, methylates ribosomal protein L11. This is Ribosomal protein L11 methyltransferase from Prochlorococcus marinus (strain MIT 9301).